The following is a 236-amino-acid chain: 2,3,4,5-tetrahydropyridine-2,6-dicarboxylate N-acetyltransferase (236 aa).

The protein belongs to the transferase hexapeptide repeat family. DapH subfamily.

The enzyme catalyses (S)-2,3,4,5-tetrahydrodipicolinate + acetyl-CoA + H2O = L-2-acetamido-6-oxoheptanedioate + CoA. It functions in the pathway amino-acid biosynthesis; L-lysine biosynthesis via DAP pathway; LL-2,6-diaminopimelate from (S)-tetrahydrodipicolinate (acetylase route): step 1/3. Functionally, catalyzes the transfer of an acetyl group from acetyl-CoA to tetrahydrodipicolinate. This chain is 2,3,4,5-tetrahydropyridine-2,6-dicarboxylate N-acetyltransferase, found in Clostridium botulinum (strain 657 / Type Ba4).